We begin with the raw amino-acid sequence, 210 residues long: MGQVFLLMPVLLVSCFLSQGAAIENQRLFNIAVSRVQHLHLLAQKMFNDFDGTLLPDERRQLNKIFLLDFCNSDSIVSPVDKHETQKSSVLKLLHISFRLIESWEYPSQTLIISNSLMVRNANQISEKLSDLKVGINLLITGSQDAYMSLDDNDSQQLPPYGNYYQNLGGDGNVRRNYELLACFKKDMHKVETYLTVAKCRKSLEANCTL.

The signal sequence occupies residues 1-22 (MGQVFLLMPVLLVSCFLSQGAA). H38 contacts Zn(2+). C71 and C183 are oxidised to a cystine. Residue E192 participates in Zn(2+) binding. C200 and C208 are joined by a disulfide.

The protein belongs to the somatotropin/prolactin family.

The protein resides in the secreted. Functionally, growth hormone plays an important role in growth control and is involved in the regulation of several anabolic processes. Implicated as an osmoregulatory substance important for seawater adaptation. This chain is Somatotropin (gh), found in Oncorhynchus tshawytscha (Chinook salmon).